Here is a 940-residue protein sequence, read N- to C-terminus: Isoleucine--tRNA ligase (940 aa).

Residues 58–68 carry the 'HIGH' region motif; that stretch reads PYANGSIHIGH. Residue glutamate 564 coordinates L-isoleucyl-5'-AMP. The 'KMSKS' region motif lies at 605–609; the sequence is KMSKS. Lysine 608 serves as a coordination point for ATP. Residues cysteine 903, cysteine 906, cysteine 923, and cysteine 926 each coordinate Zn(2+).

Belongs to the class-I aminoacyl-tRNA synthetase family. IleS type 1 subfamily. Monomer. It depends on Zn(2+) as a cofactor.

It is found in the cytoplasm. The enzyme catalyses tRNA(Ile) + L-isoleucine + ATP = L-isoleucyl-tRNA(Ile) + AMP + diphosphate. Its function is as follows. Catalyzes the attachment of isoleucine to tRNA(Ile). As IleRS can inadvertently accommodate and process structurally similar amino acids such as valine, to avoid such errors it has two additional distinct tRNA(Ile)-dependent editing activities. One activity is designated as 'pretransfer' editing and involves the hydrolysis of activated Val-AMP. The other activity is designated 'posttransfer' editing and involves deacylation of mischarged Val-tRNA(Ile). The protein is Isoleucine--tRNA ligase of Shewanella sp. (strain MR-7).